A 312-amino-acid chain; its full sequence is Phosphoribosylaminoimidazole-succinocarboxamide synthase (312 aa).

Belongs to the SAICAR synthetase family.

It carries out the reaction 5-amino-1-(5-phospho-D-ribosyl)imidazole-4-carboxylate + L-aspartate + ATP = (2S)-2-[5-amino-1-(5-phospho-beta-D-ribosyl)imidazole-4-carboxamido]succinate + ADP + phosphate + 2 H(+). It functions in the pathway purine metabolism; IMP biosynthesis via de novo pathway; 5-amino-1-(5-phospho-D-ribosyl)imidazole-4-carboxamide from 5-amino-1-(5-phospho-D-ribosyl)imidazole-4-carboxylate: step 1/2. This chain is Phosphoribosylaminoimidazole-succinocarboxamide synthase, found in Legionella pneumophila (strain Lens).